The sequence spans 212 residues: MSTENTNTAVAEEIPNLLITPSAQEYLHELLAKQNTPGIGVRIFVEHPGTPRAECCMAYSAPEEVVPTDYKQDYPDFPAYIDAPSIPYLLDAVIDYNKDRFGGQLTFRAPNSKVPRVGPDASIEERITYVLQAEINPGLAGHGGNCSLVEVQDDPEHGLTAVLKFGGGCQGCSAIDVTLKQGVETTLKEHILELQRVVDQTDHTQAEGAYFK.

[4Fe-4S] cluster contacts are provided by Cys-169 and Cys-172.

The protein belongs to the NfuA family. Homodimer. The cofactor is [4Fe-4S] cluster.

Functionally, involved in iron-sulfur cluster biogenesis. Binds a 4Fe-4S cluster, can transfer this cluster to apoproteins, and thereby intervenes in the maturation of Fe/S proteins. Could also act as a scaffold/chaperone for damaged Fe/S proteins. The chain is Fe/S biogenesis protein NfuA from Acinetobacter baumannii (strain SDF).